The chain runs to 219 residues: Orotate phosphoribosyltransferase (219 aa).

A 5-phospho-alpha-D-ribose 1-diphosphate-binding site is contributed by Lys26. 34-35 contacts orotate; sequence FF. 5-phospho-alpha-D-ribose 1-diphosphate is bound by residues 72–73, Arg98, Lys99, Lys102, His104, and 124–132; these read YK and DDVITAGTA. Residues Thr128 and Arg156 each coordinate orotate.

It belongs to the purine/pyrimidine phosphoribosyltransferase family. PyrE subfamily. Homodimer. The cofactor is Mg(2+).

It carries out the reaction orotidine 5'-phosphate + diphosphate = orotate + 5-phospho-alpha-D-ribose 1-diphosphate. Its pathway is pyrimidine metabolism; UMP biosynthesis via de novo pathway; UMP from orotate: step 1/2. Functionally, catalyzes the transfer of a ribosyl phosphate group from 5-phosphoribose 1-diphosphate to orotate, leading to the formation of orotidine monophosphate (OMP). In Stenotrophomonas maltophilia (strain R551-3), this protein is Orotate phosphoribosyltransferase.